The following is a 206-amino-acid chain: Large ribosomal subunit protein bL9 (206 aa).

The disordered stretch occupies residues 182-206; that stretch reads FAENQQKALAKEMNDNDANSINEEA. Over residues 197–206 the composition is skewed to polar residues; sequence NDANSINEEA.

It belongs to the bacterial ribosomal protein bL9 family.

Binds to the 23S rRNA. In Bartonella henselae (strain ATCC 49882 / DSM 28221 / CCUG 30454 / Houston 1) (Rochalimaea henselae), this protein is Large ribosomal subunit protein bL9.